The sequence spans 338 residues: Phenylalanine--tRNA ligase alpha subunit (338 aa).

Glutamate 252 provides a ligand contact to Mg(2+).

Belongs to the class-II aminoacyl-tRNA synthetase family. Phe-tRNA synthetase alpha subunit type 1 subfamily. Tetramer of two alpha and two beta subunits. Mg(2+) is required as a cofactor.

The protein localises to the cytoplasm. The catalysed reaction is tRNA(Phe) + L-phenylalanine + ATP = L-phenylalanyl-tRNA(Phe) + AMP + diphosphate + H(+). The protein is Phenylalanine--tRNA ligase alpha subunit (pheS) of Aquifex aeolicus (strain VF5).